The primary structure comprises 437 residues: Ribulose bisphosphate carboxylase-like protein (437 aa).

Residue K176 is the Proton acceptor of the active site. Mg(2+) contacts are provided by K202, D204, and E205. K202 is modified (N6-carboxylysine). H293 (proton acceptor) is an active-site residue.

This sequence belongs to the RuBisCO large chain family. Type IV subfamily. As to quaternary structure, homodimer. Mg(2+) serves as cofactor.

In terms of biological role, may be involved in sulfur metabolism and oxidative stress response. Does not show RuBisCO activity. This chain is Ribulose bisphosphate carboxylase-like protein, found in Archaeoglobus fulgidus (strain ATCC 49558 / DSM 4304 / JCM 9628 / NBRC 100126 / VC-16).